Reading from the N-terminus, the 374-residue chain is MSMADQLQIPADIKPRDGRFGCGPSKVRPEQLQALSTTAAPLFGTSHRQAPVKNLVGRLRSGLAELFSLPDGYQVILGNGGATAFWDAAAFGLIDKRSLHLSYGEFSSKFAAAVAKNPFVGDPVVIKSDAGSAPEPQSDPSVDLIAWAHNETSTGVAVPVRRPVDSGDALVAIDATSGAGGLPVDIGETDAYYFSPQKNFAGDGGLWLALMSPAALARVESIAASGRWVPDFLSLPIAVENSLKDQTYNTPAIGTLALMAEQVDWMLGNGGLDWAVKRTADSAGRLYSWAEERDYTTPFVADPKLRSQVVGTIDFVDDVDAAAVAKILRANGVVDTEPYRKLGRNQLRVGMFPAVDPDDVSALTQCVDWVVERL.

An L-glutamate-binding site is contributed by Arg48. Pyridoxal 5'-phosphate is bound by residues 82-83 (AT), Phe106, Thr152, Asp174, and Gln197. Lys198 is modified (N6-(pyridoxal phosphate)lysine). 249 to 250 (NT) is a binding site for pyridoxal 5'-phosphate.

The protein belongs to the class-V pyridoxal-phosphate-dependent aminotransferase family. SerC subfamily. Homodimer. The cofactor is pyridoxal 5'-phosphate.

Its subcellular location is the cytoplasm. It catalyses the reaction O-phospho-L-serine + 2-oxoglutarate = 3-phosphooxypyruvate + L-glutamate. The catalysed reaction is 4-(phosphooxy)-L-threonine + 2-oxoglutarate = (R)-3-hydroxy-2-oxo-4-phosphooxybutanoate + L-glutamate. The protein operates within amino-acid biosynthesis; L-serine biosynthesis; L-serine from 3-phospho-D-glycerate: step 2/3. It functions in the pathway cofactor biosynthesis; pyridoxine 5'-phosphate biosynthesis; pyridoxine 5'-phosphate from D-erythrose 4-phosphate: step 3/5. Catalyzes the reversible conversion of 3-phosphohydroxypyruvate to phosphoserine and of 3-hydroxy-2-oxo-4-phosphonooxybutanoate to phosphohydroxythreonine. This is Putative phosphoserine aminotransferase from Mycolicibacterium paratuberculosis (strain ATCC BAA-968 / K-10) (Mycobacterium paratuberculosis).